A 579-amino-acid polypeptide reads, in one-letter code: MRNAQKPSGMPIHRYLPFQDQITVEVPDRTWPDKVITKAPRWCAVDLRDGNQALIDPMSPARKLKMFQLLVKMGYKEIEVGFPSASQTDFDFVRQLIEGGHIPDDVSIQVLTQAREHLIERTYESLVGAKQAIVHLYNSTSVLQRRVVFNQDEDGILDIALQGARLCKKYEETLTDTHITYEYSPESFTGTELEYAARVCNAIADVFEASADKQVIINLPATVEMATPNVYADSIEWMHRNLHPREGIIISLHPHNDRGTGVAAAELGYLAGADRIEGCLFGNGERTGNVDLVTLGLNMFVQGVDPMIDFSDIDEIRRTVEYCNQLPVPERSPYGGDLVFTAFSGSHQDAIKKGFEALEKDAAAAGKSVDDFTWQVPYLPIDPKDLGRSYEAVIRVNSQSGKGGVAYLLKNEHNLDLPRRAQIEFSGVIQRRTDAVGGEVSGAQLWQIFQDEYLPSDEEQAQWGRYGLGSVSTETDESGAMTMNANLRIDGVEVRRTGHGNGPIAALLDILHHDGVDVRVLDYSEHALSEGGSASAAAYVECAVGERVLWGVGIDPSTTTSSLKALISAVNRAVRDAQA.

In terms of domain architecture, Pyruvate carboxyltransferase spans 40–314 (PRWCAVDLRD…DPMIDFSDID (275 aa)). Mg(2+) is bound by residues aspartate 49, histidine 253, histidine 255, and asparagine 289. Positions 456-579 (SDEEQAQWGR…VNRAVRDAQA (124 aa)) are regulatory domain.

Belongs to the alpha-IPM synthase/homocitrate synthase family. LeuA type 2 subfamily. In terms of assembly, homodimer. Requires Mg(2+) as cofactor.

The protein localises to the cytoplasm. It carries out the reaction 3-methyl-2-oxobutanoate + acetyl-CoA + H2O = (2S)-2-isopropylmalate + CoA + H(+). The protein operates within amino-acid biosynthesis; L-leucine biosynthesis; L-leucine from 3-methyl-2-oxobutanoate: step 1/4. Functionally, catalyzes the condensation of the acetyl group of acetyl-CoA with 3-methyl-2-oxobutanoate (2-ketoisovalerate) to form 3-carboxy-3-hydroxy-4-methylpentanoate (2-isopropylmalate). The sequence is that of 2-isopropylmalate synthase from Paenarthrobacter aurescens (strain TC1).